Consider the following 113-residue polypeptide: Venom protein 184 (113 aa).

The first 21 residues, 1–21 (MKTTLIFCILGIVIPTAVVSS), serve as a signal peptide directing secretion.

Contains 3 disulfide bonds. Expressed by the venom gland.

It localises to the secreted. This is Venom protein 184 from Lychas mucronatus (Chinese swimming scorpion).